Reading from the N-terminus, the 413-residue chain is Putative acid phosphatase 11 (413 aa).

Catalysis depends on His-35, which acts as the Nucleophile. Catalysis depends on Asp-315, which acts as the Proton donor. Cys-381 and Cys-387 are disulfide-bonded.

It belongs to the histidine acid phosphatase family.

The catalysed reaction is a phosphate monoester + H2O = an alcohol + phosphate. The chain is Putative acid phosphatase 11 (pho-11) from Caenorhabditis elegans.